We begin with the raw amino-acid sequence, 309 residues long: ATP-dependent Clp protease proteolytic subunit 3, chloroplastic (309 aa).

The N-terminal 70 residues, 1–70 (MEMSLRLASS…WDVSSFSIDS (70 aa)), are a transit peptide targeting the chloroplast. N-acetylvaline is present on V71. Residue S164 is the Nucleophile of the active site. The active site involves H189. T194 bears the Phosphothreonine mark. Residues 290-309 (DNTNLPSERSMTQNGYAAIE) are disordered. Residues 292–309 (TNLPSERSMTQNGYAAIE) show a composition bias toward polar residues.

Belongs to the peptidase S14 family. Component of the chloroplastic Clp protease core complex which consist of at least 16 proteins: CLPP4 (3 copies), CLPP5 (3 copies), CLPR4 (2 copies), ClpP1 (1 copy), CLPP6 (1 copy), CLPR2 (1 copy), CLPT1 (1 copy), CLPT2 (1 copy) and 3 copies of CLPP3 and/or CLPR1 and/or CLPR3. The core complex is organized in two heptameric rings, one containing CLPP3,4,5,6 in a 1:2:3:1 ratio and the other CLPP1 and CLPR1,2,3,4 in a 3:1:1:1:1 ratio. Interacts with CHIP. Post-translationally, ubiquitinated in vitro by CHIP. Mostly expressed in leaves. Also detected in stems, and to a lower extent, in roots (at protein level).

It localises to the plastid. The protein resides in the chloroplast stroma. The enzyme catalyses Hydrolysis of proteins to small peptides in the presence of ATP and magnesium. alpha-casein is the usual test substrate. In the absence of ATP, only oligopeptides shorter than five residues are hydrolyzed (such as succinyl-Leu-Tyr-|-NHMec, and Leu-Tyr-Leu-|-Tyr-Trp, in which cleavage of the -Tyr-|-Leu- and -Tyr-|-Trp bonds also occurs).. Its function is as follows. Cleaves peptides in various proteins in a process that requires ATP hydrolysis. Has a chymotrypsin-like activity. Plays a major role in the degradation of misfolded proteins. In the absence of CLPP3, modified ClpPR core(s) could be formed, albeit at strongly reduced levels. This is ATP-dependent Clp protease proteolytic subunit 3, chloroplastic from Arabidopsis thaliana (Mouse-ear cress).